Reading from the N-terminus, the 361-residue chain is GDP-mannose 4,6 dehydratase 1 (361 aa).

NADP(+) is bound by residues 23–28 (GITGQD), 79–80 (DL), 101–105 (LAAQS), and Y116. S150 is an active-site residue. Residues E152 and Y173 each act as nucleophile in the active site. 3 residues coordinate NADP(+): K177, H203, and R208.

Belongs to the NAD(P)-dependent epimerase/dehydratase family. GDP-mannose 4,6-dehydratase subfamily. Homotetramer. Requires NADP(+) as cofactor. In terms of tissue distribution, expressed in roots,stipules and pollen just before anthesis. Primarily localized to the root meristem and columella root cap. Not expressed in emerging lateral roots.

It carries out the reaction GDP-alpha-D-mannose = GDP-4-dehydro-alpha-D-rhamnose + H2O. Its pathway is nucleotide-sugar biosynthesis; GDP-L-fucose biosynthesis via de novo pathway; GDP-L-fucose from GDP-alpha-D-mannose: step 1/2. Functionally, catalyzes the conversion of GDP-D-mannose to GDP-4-dehydro-6-deoxy-D-mannose. The polypeptide is GDP-mannose 4,6 dehydratase 1 (GMD1) (Arabidopsis thaliana (Mouse-ear cress)).